The chain runs to 320 residues: uncharacterized protein (320 aa).

Positions 1-40 are disordered; it reads MDHPSTSSLPRKKVKAGVKKAGKKTGKKTTGKKKTTPSAI. Basic residues predominate over residues 10 to 35; sequence PRKKVKAGVKKAGKKTGKKTTGKKKT. Residues 51-71 traverse the membrane as a helical segment; the sequence is LLVLLAVLSYLAALSLGLYIM. 4 N-linked (GlcNAc...) asparagine glycosylation sites follow: asparagine 92, asparagine 122, asparagine 154, and asparagine 167. The next 2 membrane-spanning stretches (helical) occupy residues 186 to 206 and 216 to 236; these read PLVH…AMTG and MLVT…VTVL. Asparagine 247 carries an N-linked (GlcNAc...) asparagine glycan. Residues 272 to 292 form a helical membrane-spanning segment; that stretch reads VQGALVAIVAVFYLTMGVVFV.

Its subcellular location is the membrane. Its pathway is secondary metabolite biosynthesis; terpenoid biosynthesis. Its function is as follows. Part of the gene cluster that mediates the biosynthesis of an ophiobolin family sesterterpenoid. This is an uncharacterized protein from Aspergillus terreus.